Consider the following 1399-residue polypeptide: DNA-directed RNA polymerase subunit beta' (1399 aa).

Residues C70, C72, C85, and C88 each coordinate Zn(2+). Positions 460, 462, and 464 each coordinate Mg(2+). Zn(2+) contacts are provided by C814, C888, C895, and C898. The segment at 1367–1399 (SERKRQRDLGKPQRVSASEAEAALTEALNSSGN) is disordered. The segment covering 1382–1399 (SASEAEAALTEALNSSGN) has biased composition (low complexity).

This sequence belongs to the RNA polymerase beta' chain family. As to quaternary structure, the RNAP catalytic core consists of 2 alpha, 1 beta, 1 beta' and 1 omega subunit. When a sigma factor is associated with the core the holoenzyme is formed, which can initiate transcription. The cofactor is Mg(2+). Requires Zn(2+) as cofactor.

It catalyses the reaction RNA(n) + a ribonucleoside 5'-triphosphate = RNA(n+1) + diphosphate. Its function is as follows. DNA-dependent RNA polymerase catalyzes the transcription of DNA into RNA using the four ribonucleoside triphosphates as substrates. The sequence is that of DNA-directed RNA polymerase subunit beta' from Pseudomonas aeruginosa (strain UCBPP-PA14).